A 295-amino-acid chain; its full sequence is RNA polymerase sigma factor RpoH (295 aa).

Positions 52–121 (MVTSHLRLVA…IQEYILRSWS (70 aa)) are sigma-70 factor domain-2. Positions 76 to 79 (EVIS) match the Interaction with polymerase core subunit RpoC motif. Residues 230 to 281 (AMVELTDRERHILTERRLKDDPTTLEELAAQYGVSRERVRQIEVRAFEKLQK) form a sigma-70 factor domain-4 region. Residues 254–273 (LEELAAQYGVSRERVRQIEV) constitute a DNA-binding region (H-T-H motif).

Belongs to the sigma-70 factor family. RpoH subfamily. Interacts with the RNA polymerase core enzyme.

The protein resides in the cytoplasm. Functionally, sigma factors are initiation factors that promote the attachment of RNA polymerase to specific initiation sites and are then released. This sigma factor is involved in regulation of expression of heat shock genes. In Caulobacter vibrioides (strain ATCC 19089 / CIP 103742 / CB 15) (Caulobacter crescentus), this protein is RNA polymerase sigma factor RpoH.